A 226-amino-acid chain; its full sequence is ATP-dependent dethiobiotin synthetase BioD (226 aa).

Residue 12–17 (GVGKTV) participates in ATP binding. Threonine 16 contacts Mg(2+). Lysine 37 is an active-site residue. Threonine 41 is a binding site for substrate. ATP is bound by residues aspartate 49, 108-111 (EGAG), 169-170 (GS), and 197-199 (PAG). Mg(2+) is bound by residues aspartate 49 and glutamate 108.

This sequence belongs to the dethiobiotin synthetase family. As to quaternary structure, homodimer. It depends on Mg(2+) as a cofactor.

It localises to the cytoplasm. The catalysed reaction is (7R,8S)-7,8-diammoniononanoate + CO2 + ATP = (4R,5S)-dethiobiotin + ADP + phosphate + 3 H(+). The protein operates within cofactor biosynthesis; biotin biosynthesis; biotin from 7,8-diaminononanoate: step 1/2. Its function is as follows. Catalyzes a mechanistically unusual reaction, the ATP-dependent insertion of CO2 between the N7 and N8 nitrogen atoms of 7,8-diaminopelargonic acid (DAPA, also called 7,8-diammoniononanoate) to form a ureido ring. This is ATP-dependent dethiobiotin synthetase BioD from Mycobacterium leprae (strain Br4923).